A 176-amino-acid chain; its full sequence is Disulfide bond formation protein B (176 aa).

Residues M1–A14 lie on the Cytoplasmic side of the membrane. A helical membrane pass occupies residues W15–Y31. Over F32–V49 the chain is Periplasmic. Residues C41 and C44 are joined by a disulfide bond. The chain crosses the membrane as a helical span at residues A50 to P65. Residues R66–Y71 are Cytoplasmic-facing. A helical membrane pass occupies residues L72 to W89. The Periplasmic segment spans residues A90–Q144. A disulfide bridge connects residues C104 and C130. The helical transmembrane segment at W145–S163 threads the bilayer. The Cytoplasmic segment spans residues Q164 to R176.

The protein belongs to the DsbB family.

Its subcellular location is the cell inner membrane. In terms of biological role, required for disulfide bond formation in some periplasmic proteins. Acts by oxidizing the DsbA protein. The chain is Disulfide bond formation protein B from Yersinia pestis bv. Antiqua (strain Nepal516).